A 473-amino-acid chain; its full sequence is Siroheme synthase (473 aa).

Residues 1 to 203 are precorrin-2 dehydrogenase /sirohydrochlorin ferrochelatase; that stretch reads MQYLPIFTKL…GDTQAAEQQL (203 aa). Residues 22-23 and 43-44 contribute to the NAD(+) site; these read DV and PK. The residue at position 128 (Ser-128) is a Phosphoserine. Residues 215–473 form a uroporphyrinogen-III C-methyltransferase region; sequence GEVYVVGAGP…SFAQPLTDVA (259 aa). An S-adenosyl-L-methionine-binding site is contributed by Pro-224. Asp-247 serves as the catalytic Proton acceptor. Lys-269 acts as the Proton donor in catalysis. Residues 300-302, Ile-305, 330-331, Met-382, and Gly-411 each bind S-adenosyl-L-methionine; these read GGD and TA.

The protein in the N-terminal section; belongs to the precorrin-2 dehydrogenase / sirohydrochlorin ferrochelatase family. This sequence in the C-terminal section; belongs to the precorrin methyltransferase family.

The enzyme catalyses uroporphyrinogen III + 2 S-adenosyl-L-methionine = precorrin-2 + 2 S-adenosyl-L-homocysteine + H(+). The catalysed reaction is precorrin-2 + NAD(+) = sirohydrochlorin + NADH + 2 H(+). It catalyses the reaction siroheme + 2 H(+) = sirohydrochlorin + Fe(2+). Its pathway is cofactor biosynthesis; adenosylcobalamin biosynthesis; precorrin-2 from uroporphyrinogen III: step 1/1. It functions in the pathway cofactor biosynthesis; adenosylcobalamin biosynthesis; sirohydrochlorin from precorrin-2: step 1/1. The protein operates within porphyrin-containing compound metabolism; siroheme biosynthesis; precorrin-2 from uroporphyrinogen III: step 1/1. It participates in porphyrin-containing compound metabolism; siroheme biosynthesis; siroheme from sirohydrochlorin: step 1/1. Its pathway is porphyrin-containing compound metabolism; siroheme biosynthesis; sirohydrochlorin from precorrin-2: step 1/1. Its function is as follows. Multifunctional enzyme that catalyzes the SAM-dependent methylations of uroporphyrinogen III at position C-2 and C-7 to form precorrin-2 via precorrin-1. Then it catalyzes the NAD-dependent ring dehydrogenation of precorrin-2 to yield sirohydrochlorin. Finally, it catalyzes the ferrochelation of sirohydrochlorin to yield siroheme. The chain is Siroheme synthase from Pseudoalteromonas translucida (strain TAC 125).